A 334-amino-acid chain; its full sequence is Phospho-N-acetylmuramoyl-pentapeptide-transferase (334 aa).

The next 10 helical transmembrane spans lie at 11–31, 55–75, 84–104, 124–144, 158–178, 184–204, 205–225, 233–253, 258–278, and 311–331; these read GAGL…IPLM, PTMG…IFAP, LIIA…DDYI, VGLA…GTAV, PLYY…VNFA, LLGG…ALAL, GQTD…GFLH, IFMG…LAVL, FLLV…ILQV, and LFWG…PGML.

This sequence belongs to the glycosyltransferase 4 family. MraY subfamily. Mg(2+) is required as a cofactor.

The protein resides in the cell membrane. It carries out the reaction UDP-N-acetyl-alpha-D-muramoyl-L-alanyl-gamma-D-glutamyl-meso-2,6-diaminopimeloyl-D-alanyl-D-alanine + di-trans,octa-cis-undecaprenyl phosphate = di-trans,octa-cis-undecaprenyl diphospho-N-acetyl-alpha-D-muramoyl-L-alanyl-D-glutamyl-meso-2,6-diaminopimeloyl-D-alanyl-D-alanine + UMP. The protein operates within cell wall biogenesis; peptidoglycan biosynthesis. Its function is as follows. Catalyzes the initial step of the lipid cycle reactions in the biosynthesis of the cell wall peptidoglycan: transfers peptidoglycan precursor phospho-MurNAc-pentapeptide from UDP-MurNAc-pentapeptide onto the lipid carrier undecaprenyl phosphate, yielding undecaprenyl-pyrophosphoryl-MurNAc-pentapeptide, known as lipid I. This is Phospho-N-acetylmuramoyl-pentapeptide-transferase from Symbiobacterium thermophilum (strain DSM 24528 / JCM 14929 / IAM 14863 / T).